The primary structure comprises 218 residues: Octanoyltransferase (218 aa).

The BPL/LPL catalytic domain maps to 32-218 (GEAAEAIWLL…LRTFPQHFPD (187 aa)). Substrate-binding positions include 71-78 (RGGQYTYH), 151-153 (AIG), and 164-166 (GLS). C182 acts as the Acyl-thioester intermediate in catalysis.

The protein belongs to the LipB family.

Its subcellular location is the cytoplasm. The catalysed reaction is octanoyl-[ACP] + L-lysyl-[protein] = N(6)-octanoyl-L-lysyl-[protein] + holo-[ACP] + H(+). Its pathway is protein modification; protein lipoylation via endogenous pathway; protein N(6)-(lipoyl)lysine from octanoyl-[acyl-carrier-protein]: step 1/2. Its function is as follows. Catalyzes the transfer of endogenously produced octanoic acid from octanoyl-acyl-carrier-protein onto the lipoyl domains of lipoate-dependent enzymes. Lipoyl-ACP can also act as a substrate although octanoyl-ACP is likely to be the physiological substrate. In Cereibacter sphaeroides (strain ATCC 17023 / DSM 158 / JCM 6121 / CCUG 31486 / LMG 2827 / NBRC 12203 / NCIMB 8253 / ATH 2.4.1.) (Rhodobacter sphaeroides), this protein is Octanoyltransferase.